The following is a 234-amino-acid chain: Thymidylate kinase (234 aa).

20-27 is an ATP binding site; that stretch reads GIDASGKT.

This sequence belongs to the thymidylate kinase family.

The enzyme catalyses dTMP + ATP = dTDP + ADP. Its function is as follows. Phosphorylation of dTMP to form dTDP in both de novo and salvage pathways of dTTP synthesis. The sequence is that of Thymidylate kinase from Mycoplasmopsis pulmonis (strain UAB CTIP) (Mycoplasma pulmonis).